We begin with the raw amino-acid sequence, 739 residues long: Sulfate transporter (739 aa).

The segment at 1–44 is disordered; the sequence is MSSENKEQHNLSPRDLPEEAYGFPPELPLGAQRGSSTDLRQFEP. S12 carries the phosphoserine modification. The next 2 membrane-spanning stretches (helical) occupy residues 112–132 and 137–157; these read MMSGLIVGILLVPQSIAYSLL and PIYGLYTSFFASIIYFLFGTS. N205 is a glycosylation site (N-linked (GlcNAc...) asparagine). A run of 2 helical transmembrane segments spans residues 227 to 247 and 255 to 275; these read FMAGVYQVAMGFFQVGFVSVY and GFVTGASFTILTSQAKYLLGL. N-linked (GlcNAc...) asparagine glycosylation occurs at N357. Helical transmembrane passes span 378-398, 420-440, 455-475, and 524-544; these read LIPNVAVDAIAISIIGFAITV, AIGFCNIIPSFFHCITTSAAL, LSAIVTSLVLLLVLLLIAPLF, and LLSTEIGLLVGVCFSMFCVIL. The region spanning 568 to 719 is the STAS domain; that stretch reads TYKNLRSKSG…YSLSEAVAFA (152 aa).

It belongs to the SLC26A/SulP transporter (TC 2.A.53) family. In terms of processing, N-glycosylated. As to expression, cartilage and intestine. Expressed in the kidney (at protein level).

It localises to the cell membrane. It is found in the apical cell membrane. It catalyses the reaction oxalate(in) + sulfate(out) = oxalate(out) + sulfate(in). It carries out the reaction sulfate(out) + 2 chloride(in) = sulfate(in) + 2 chloride(out). The enzyme catalyses oxalate(out) + 2 chloride(in) = oxalate(in) + 2 chloride(out). The catalysed reaction is bromide(in) + chloride(out) = bromide(out) + chloride(in). It catalyses the reaction nitrate(in) + chloride(out) = nitrate(out) + chloride(in). It carries out the reaction iodide(in) + chloride(out) = iodide(out) + chloride(in). Sulfate transporter which mediates sulfate uptake into chondrocytes in order to maintain adequate sulfation of proteoglycans which is needed for cartilage development. Mediates electroneutral anion exchange of sulfate ions for oxalate ions, sulfate and oxalate ions for chloride and/or hydroxyl ions and chloride ions for bromide, iodide and nitrate ions. The coupling of sulfate transport to both hydroxyl and chloride ions likely serves to ensure transport at both acidic pH when most sulfate uptake is mediated by sulfate-hydroxide exchange and alkaline pH when most sulfate uptake is mediated by sulfate-chloride exchange. Essential for chondrocyte proliferation, differentiation and cell size expansion. The polypeptide is Sulfate transporter (Slc26a2) (Rattus norvegicus (Rat)).